Here is a 573-residue protein sequence, read N- to C-terminus: Proline--tRNA ligase (573 aa).

The protein belongs to the class-II aminoacyl-tRNA synthetase family. ProS type 1 subfamily. As to quaternary structure, homodimer.

Its subcellular location is the cytoplasm. The catalysed reaction is tRNA(Pro) + L-proline + ATP = L-prolyl-tRNA(Pro) + AMP + diphosphate. Its function is as follows. Catalyzes the attachment of proline to tRNA(Pro) in a two-step reaction: proline is first activated by ATP to form Pro-AMP and then transferred to the acceptor end of tRNA(Pro). As ProRS can inadvertently accommodate and process non-cognate amino acids such as alanine and cysteine, to avoid such errors it has two additional distinct editing activities against alanine. One activity is designated as 'pretransfer' editing and involves the tRNA(Pro)-independent hydrolysis of activated Ala-AMP. The other activity is designated 'posttransfer' editing and involves deacylation of mischarged Ala-tRNA(Pro). The misacylated Cys-tRNA(Pro) is not edited by ProRS. This Cupriavidus necator (strain ATCC 17699 / DSM 428 / KCTC 22496 / NCIMB 10442 / H16 / Stanier 337) (Ralstonia eutropha) protein is Proline--tRNA ligase.